Here is a 387-residue protein sequence, read N- to C-terminus: 3-ketoacyl-CoA thiolase (387 aa).

Cysteine 91 acts as the Acyl-thioester intermediate in catalysis. Catalysis depends on proton acceptor residues histidine 343 and cysteine 373.

It belongs to the thiolase-like superfamily. Thiolase family. Heterotetramer of two alpha chains (FadB) and two beta chains (FadA).

It is found in the cytoplasm. The catalysed reaction is an acyl-CoA + acetyl-CoA = a 3-oxoacyl-CoA + CoA. It participates in lipid metabolism; fatty acid beta-oxidation. Catalyzes the final step of fatty acid oxidation in which acetyl-CoA is released and the CoA ester of a fatty acid two carbons shorter is formed. The sequence is that of 3-ketoacyl-CoA thiolase from Photobacterium profundum (strain SS9).